The chain runs to 111 residues: T cell receptor beta variable 20-1 (111 aa).

A signal peptide spans methionine 1 to glycine 15. In terms of domain architecture, Ig-like spans alanine 16 to arginine 111. Cysteines 37 and 108 form a disulfide.

In terms of assembly, alpha-beta TR is a heterodimer composed of an alpha and beta chain; disulfide-linked. The alpha-beta TR is associated with the transmembrane signaling CD3 coreceptor proteins to form the TR-CD3 (TcR or TCR). The assembly of alpha-beta TR heterodimers with CD3 occurs in the endoplasmic reticulum where a single alpha-beta TR heterodimer associates with one CD3D-CD3E heterodimer, one CD3G-CD3E heterodimer and one CD247 homodimer forming a stable octameric structure. CD3D-CD3E and CD3G-CD3E heterodimers preferentially associate with TR alpha and TR beta chains, respectively. The association of the CD247 homodimer is the last step of TcR assembly in the endoplasmic reticulum and is required for transport to the cell surface.

The protein localises to the cell membrane. V region of the variable domain of T cell receptor (TR) beta chain that participates in the antigen recognition. Alpha-beta T cell receptors are antigen specific receptors which are essential to the immune response and are present on the cell surface of T lymphocytes. Recognize peptide-major histocompatibility (MH) (pMH) complexes that are displayed by antigen presenting cells (APC), a prerequisite for efficient T cell adaptive immunity against pathogens. Binding of alpha-beta TR to pMH complex initiates TR-CD3 clustering on the cell surface and intracellular activation of LCK that phosphorylates the ITAM motifs of CD3G, CD3D, CD3E and CD247 enabling the recruitment of ZAP70. In turn ZAP70 phosphorylates LAT, which recruits numerous signaling molecules to form the LAT signalosome. The LAT signalosome propagates signal branching to three major signaling pathways, the calcium, the mitogen-activated protein kinase (MAPK) kinase and the nuclear factor NF-kappa-B (NF-kB) pathways, leading to the mobilization of transcription factors that are critical for gene expression and essential for T cell growth and differentiation. The T cell repertoire is generated in the thymus, by V-(D)-J rearrangement. This repertoire is then shaped by intrathymic selection events to generate a peripheral T cell pool of self-MH restricted, non-autoaggressive T cells. Post-thymic interaction of alpha-beta TR with the pMH complexes shapes TR structural and functional avidity. In Homo sapiens (Human), this protein is T cell receptor beta variable 20-1.